The primary structure comprises 194 residues: HTH-type transcriptional regulator BetI (194 aa).

One can recognise an HTH tetR-type domain in the interval 8-68; the sequence is EIRRAQLIDA…ATMRHVLRDL (61 aa). The segment at residues 31–50 is a DNA-binding region (H-T-H motif); that stretch reads TLASVAQRANISTGIVSHYF.

It participates in amine and polyamine biosynthesis; betaine biosynthesis via choline pathway [regulation]. Its function is as follows. Repressor involved in the biosynthesis of the osmoprotectant glycine betaine. It represses transcription of the choline transporter BetT and the genes of BetAB involved in the synthesis of glycine betaine. The polypeptide is HTH-type transcriptional regulator BetI (Burkholderia ambifaria (strain MC40-6)).